Consider the following 432-residue polypeptide: Myb family transcription factor EFM (432 aa).

The stretch at 36-81 (LEDLLSRLEQERLKIDAFKRELPLCMQLLNNAVEVYKQQLEAYRAN) forms a coiled coil. 2 stretches are compositionally biased toward polar residues: residues 123 to 139 (SQSE…TDQS) and 187 to 197 (SPTNEHTNGQD). The disordered stretch occupies residues 123 to 237 (SQSETKPKNI…SQSNRKARRC (115 aa)). Residues 201–231 (ESMINNDNNYNNNNNNNSNSNGVSSTTSQSN) are compositionally biased toward low complexity. The HTH myb-type domain occupies 230 to 290 (SNRKARRCWS…HLQKYRLHTR (61 aa)). A DNA-binding region (H-T-H motif) is located at residues 261 to 286 (PKQIRELMKVDGLTNDEVKSHLQKYR). The disordered stretch occupies residues 354-412 (FYTTPPPPQPLHHHHFQTFNGSSGGTASTDSTHHQVTDSPTVEGKSPESGGGERKGLAA).

Interacts with JMJ30, but not with SVP, FLC or CO. As to expression, specifically expressed in vascular tissues of cotyledons, rosette leaves and cauline leaves. Not detected in the vegetative shoot apical meristem.

The protein resides in the nucleus. Functionally, transcription factor acting as a flowering repressor, directly repressing FT expression in a dosage-dependent manner in the leaf vasculature. In Arabidopsis thaliana (Mouse-ear cress), this protein is Myb family transcription factor EFM.